The following is a 578-amino-acid chain: MAQISKCSSLSAELNESSIISHHHGNLWDDDFIQSLKSSNGAPQYHERAAKLVEEIKNLVVSEMKDCNDDLIRRLQMVDIFECLGIDRHFQHEIQVALDYVYRYWNQLEGIGIGSRDSLIKDFNATALGFRALRLHRYNVSSDVLENFKNENGQFFCSSTVEEKEVRCMLTLFRASEISFPGEKVMDEAKAFTTEYLTKVLTGVDVTDVNQSLLREVKYALEFPWHCSLPRWEARSFIEICGQNDSWLKSIMNKRVLELAKLDFNILQWAHHRELQLLSSWWSQSDIAQQNFYRKRHVEFYLWVVIGTFEPEFSTCRITFAKISTLMTILDDLYDTHGTLEQLKIFTEGVKRWDLSLVDRLPDYIKITFEFFLNTSNELIAEVAKTQERDMSAYIRKTWERYLEAYLQEAEWIAARHVPTFDEYMKNGISSSGMCILNLYSLLLMGQLLPDDVLEQIHSPSKIHELVELTARLVDDSKDFETKKVGGELASGIECYVKDNPECTLEDASNHLNGLLDLTVKELNWEFVRHDSVALCFKKFAFNVARGLRLIYKYRDGFDVSNQEMKTHIFKILIDPLT.

Residues Asp-331, Asp-335, and Asp-475 each contribute to the Mg(2+) site. The DDXXD motif signature appears at 331–335 (DDLYD).

The protein belongs to the terpene synthase family. Tpsd subfamily. Mg(2+) is required as a cofactor. Mn(2+) serves as cofactor.

It is found in the cytoplasm. The enzyme catalyses (2E,6E)-farnesyl diphosphate = longifolene + diphosphate. The protein operates within sesquiterpene biosynthesis. Its pathway is terpene metabolism; oleoresin biosynthesis. Its function is as follows. Involved in defensive oleoresin formation in conifers in response to insect attack or other injury. Involved in sesquiterpene (C15) olefins biosynthesis. Produces mainly longifolene, but also multiple minor products including alpha-longipinene, alpha-longicyclene, E-beta-farnesene, longiborneol, cyclosativene, beta-longipinene, and 12 other sesquiterpenes when used with farnesyl diphosphate (FPP) as substrate. The sequence is that of Longifolene synthase (TPS-Lon) from Picea abies (Norway spruce).